The chain runs to 157 residues: Protein NrdI (157 aa).

It belongs to the NrdI family.

In terms of biological role, probably involved in ribonucleotide reductase function. This Mycoplasma capricolum subsp. capricolum (strain California kid / ATCC 27343 / NCTC 10154) protein is Protein NrdI.